The chain runs to 474 residues: L-arabinose isomerase (474 aa).

Mn(2+)-binding residues include Glu-306, Glu-331, His-348, and His-447.

It belongs to the arabinose isomerase family. Mn(2+) serves as cofactor.

It carries out the reaction beta-L-arabinopyranose = L-ribulose. The protein operates within carbohydrate degradation; L-arabinose degradation via L-ribulose; D-xylulose 5-phosphate from L-arabinose (bacterial route): step 1/3. In terms of biological role, catalyzes the conversion of L-arabinose to L-ribulose. This chain is L-arabinose isomerase, found in Leuconostoc mesenteroides subsp. mesenteroides (strain ATCC 8293 / DSM 20343 / BCRC 11652 / CCM 1803 / JCM 6124 / NCDO 523 / NBRC 100496 / NCIMB 8023 / NCTC 12954 / NRRL B-1118 / 37Y).